Here is a 235-residue protein sequence, read N- to C-terminus: MTKGILLGDKFPDFRAETNEGFIPSFYDWIGKDSWAILFSHPRDFTPVCTTELARLVQLAPEFKKRNVKLIGLSCDSAESHRKWVDDIMAVCKMKCNDGDTCCSGNKLPFPIIADENRFLATELGMMDPDERDENGNALTARCVFIIGPEKTLKLSILYPATTGRNFDEILRVVDSLQLTAVKLVATPVDWKGGDDCVVLPTIDDTEAKKLFGEKINTIELPSGKHYLRMVAHPK.

The Thioredoxin domain maps to 5 to 179 (ILLGDKFPDF…ILRVVDSLQL (175 aa)). The active site involves C49. C49 serves as the catalytic Cysteine sulfenic acid (-SOH) intermediate.

It belongs to the peroxiredoxin family. Prx6 subfamily.

It is found in the cytoplasm. The catalysed reaction is a hydroperoxide + [protein]-dithiol = [protein]-disulfide + an alcohol + H2O. Thiol-specific peroxidase that catalyzes the reduction of hydrogen peroxide and organic hydroperoxides to water and alcohols, respectively. Plays a role in cell protection against oxidative stress by detoxifying peroxides. This chain is 1-Cys peroxiredoxin, found in Dirofilaria immitis (Canine heartworm).